The following is a 219-amino-acid chain: Tegument protein UL14 (219 aa).

The interval 159 to 219 is disordered; that stretch reads VHTDAPSRPG…GFARDCPDGE (61 aa). The segment covering 186-202 has biased composition (pro residues); that stretch reads APPPETAPSPEPAPGPA.

This sequence belongs to the alphaherpesvirinae HHV-1 UL14 protein family. Phosphorylated.

Its subcellular location is the virion tegument. It is found in the host cytoplasm. The protein resides in the host nucleus. Contributes to the nuclear transport of the viral transcriptional activator VP16 during the early phase of infection. Therefore, participates indirectly in the regulation of the immediate-early gene expression. Additionally, seems to be important for efficient nuclear targeting of capsids. This is Tegument protein UL14 from Human herpesvirus 2 (strain HG52) (HHV-2).